The chain runs to 362 residues: Mitochondrial distribution and morphology protein 12 (362 aa).

Residues 1-361 form the SMP-LTD domain; the sequence is MSFDINWSQL…WPSWLCFDMS (361 aa). Disordered stretches follow at residues 65-141 and 170-207; these read DFYE…AATP and TPSGRDTPTQILNQMRTGPNSPPISNTPISSSKKSKRG. Composition is skewed to polar residues over residues 106–119 and 170–187; these read VTLSETTESKTQFA and TPSGRDTPTQILNQMRTG. The segment covering 192-201 has biased composition (low complexity); sequence PISNTPISSS.

This sequence belongs to the MDM12 family. Component of the ER-mitochondria encounter structure (ERMES) or MDM complex, composed of MMM1, MDM10, MDM12 and MDM34. An MMM1 homodimer associates with one molecule of MDM12 on each side in a pairwise head-to-tail manner, and the SMP-LTD domains of MMM1 and MDM12 generate a continuous hydrophobic tunnel for phospholipid trafficking.

It is found in the mitochondrion outer membrane. It localises to the endoplasmic reticulum membrane. Component of the ERMES/MDM complex, which serves as a molecular tether to connect the endoplasmic reticulum (ER) and mitochondria. Components of this complex are involved in the control of mitochondrial shape and protein biogenesis, and function in nonvesicular lipid trafficking between the ER and mitochondria. MDM12 is required for the interaction of the ER-resident membrane protein MMM1 and the outer mitochondrial membrane-resident beta-barrel protein MDM10. The MDM12-MMM1 subcomplex functions in the major beta-barrel assembly pathway that is responsible for biogenesis of all mitochondrial outer membrane beta-barrel proteins, and acts in a late step after the SAM complex. The MDM10-MDM12-MMM1 subcomplex further acts in the TOM40-specific pathway after the action of the MDM12-MMM1 complex. Essential for establishing and maintaining the structure of mitochondria and maintenance of mtDNA nucleoids. This chain is Mitochondrial distribution and morphology protein 12, found in Meyerozyma guilliermondii (strain ATCC 6260 / CBS 566 / DSM 6381 / JCM 1539 / NBRC 10279 / NRRL Y-324) (Yeast).